We begin with the raw amino-acid sequence, 192 residues long: UPF0301 protein Bamb_0737 (192 aa).

It belongs to the UPF0301 (AlgH) family.

The polypeptide is UPF0301 protein Bamb_0737 (Burkholderia ambifaria (strain ATCC BAA-244 / DSM 16087 / CCUG 44356 / LMG 19182 / AMMD) (Burkholderia cepacia (strain AMMD))).